Consider the following 329-residue polypeptide: Transmembrane protein I329L (329 aa).

The N-terminal stretch at 1-31 is a signal peptide; the sequence is MLRVFIFFVFLGSGLAGRIKPQITCKYFISE. Asparagine 32, asparagine 39, asparagine 44, asparagine 76, asparagine 82, and asparagine 101 each carry an N-linked (GlcNAc...) asparagine; by host glycan. Residues 32-239 are Extracellular-facing; that stretch reads NNTWYKYNVT…NTERYKNCYP (208 aa). The stretch at 112–133 is one LRR repeat; that stretch reads ELKFLDLRYNNLQFIDYNILRK. N-linked (GlcNAc...) asparagine; by host glycans are attached at residues asparagine 185 and asparagine 219. Residues cysteine 195 and cysteine 237 are joined by a disulfide bond. The helical transmembrane segment at 240–260 threads the bilayer; the sequence is FVLVSILCSCISFLFLIICLL. Topologically, residues 261-329 are cytoplasmic; it reads RSICKKYSCT…EKKASCSRRK (69 aa).

The protein belongs to the asfivirus I329L family. In terms of processing, highly glycosylated.

It localises to the host endoplasmic reticulum membrane. It is found in the host Golgi apparatus membrane. Viral TLR3 homolog that probably prevents TLR3 dimerization and subsequent induction of IFN. Inhibits dsRNA-stimulated activation of NF-kB and IRF3. This is Transmembrane protein I329L from Ornithodoros (relapsing fever ticks).